The chain runs to 386 residues: MSFFHGVTVTNVDIGARTIALPASSVIGLCDVFTPGAQASAKPNVPVLLTSKKDAAAAFGIGSSIYLACEAIYNRAQAVIVAVGVEAAETPEAQASAVIGGVSAAGERTGLQALLDGKSRFNAQPRLLVAPGHSAQQAVATAMDGLAEKLRAIAILDGPNSTDEAAVAYAKNFGSKRLFMVDPGVQVWDSATNAARKAPASAYAAGLFAWTDAEYGFWSSPSNKEIKGITGTSRPVEFLDGDETCRANLLNNANIATIIRDDGYRLWGNRTLSSDSKWAFVTRVRTMDLVMDAILAGHKWAVDRGITKTYVKDVTEGLRAFMRDLKNQGAVINFEVYADPDLNSASQLAQGKVYWNIRFTDVPPAENPNFRVEVTDQWLTEVLDVA.

The protein belongs to the myoviridae tail sheath protein family.

It is found in the secreted. The polypeptide is Putative prophage major tail sheath protein (Pseudomonas aeruginosa (strain UCBPP-PA14)).